The following is a 104-amino-acid chain: uncharacterized protein (104 aa).

This is an uncharacterized protein from Escherichia coli (strain K12).